The following is a 271-amino-acid chain: 5-deoxy-glucuronate isomerase (271 aa).

This sequence belongs to the isomerase IolB family.

It catalyses the reaction 5-deoxy-D-glucuronate = 5-dehydro-2-deoxy-D-gluconate. It functions in the pathway polyol metabolism; myo-inositol degradation into acetyl-CoA; acetyl-CoA from myo-inositol: step 4/7. In terms of biological role, involved in the isomerization of 5-deoxy-glucuronate (5DG) to 5-dehydro-2-deoxy-D-gluconate (DKG or 2-deoxy-5-keto-D-gluconate). This Bacillus velezensis (strain DSM 23117 / BGSC 10A6 / LMG 26770 / FZB42) (Bacillus amyloliquefaciens subsp. plantarum) protein is 5-deoxy-glucuronate isomerase.